The following is a 333-amino-acid chain: Lipoyl synthase (333 aa).

Positions 1–15 are enriched in polar residues; that stretch reads MSTLVESPVPSNDSQ. Positions 1–34 are disordered; that stretch reads MSTLVESPVPSNDSQAAAPAAYDPTQKQKSQAKT. [4Fe-4S] cluster is bound by residues Cys-80, Cys-85, Cys-91, Cys-106, Cys-110, Cys-113, and Ser-320. One can recognise a Radical SAM core domain in the interval 91-309; sequence CFGKGTATFM…EREAYAMGFT (219 aa).

Belongs to the radical SAM superfamily. Lipoyl synthase family. [4Fe-4S] cluster serves as cofactor.

The protein resides in the cytoplasm. It carries out the reaction [[Fe-S] cluster scaffold protein carrying a second [4Fe-4S](2+) cluster] + N(6)-octanoyl-L-lysyl-[protein] + 2 oxidized [2Fe-2S]-[ferredoxin] + 2 S-adenosyl-L-methionine + 4 H(+) = [[Fe-S] cluster scaffold protein] + N(6)-[(R)-dihydrolipoyl]-L-lysyl-[protein] + 4 Fe(3+) + 2 hydrogen sulfide + 2 5'-deoxyadenosine + 2 L-methionine + 2 reduced [2Fe-2S]-[ferredoxin]. The protein operates within protein modification; protein lipoylation via endogenous pathway; protein N(6)-(lipoyl)lysine from octanoyl-[acyl-carrier-protein]: step 2/2. Functionally, catalyzes the radical-mediated insertion of two sulfur atoms into the C-6 and C-8 positions of the octanoyl moiety bound to the lipoyl domains of lipoate-dependent enzymes, thereby converting the octanoylated domains into lipoylated derivatives. The polypeptide is Lipoyl synthase (Bordetella parapertussis (strain 12822 / ATCC BAA-587 / NCTC 13253)).